A 212-amino-acid chain; its full sequence is LexA repressor (212 aa).

A DNA-binding region (H-T-H motif) is located at residues 29–49; the sequence is VREIGEAVGLSSSSTIHGHIE. Catalysis depends on for autocatalytic cleavage activity residues Ser-133 and Lys-171.

It belongs to the peptidase S24 family. As to quaternary structure, homodimer.

The enzyme catalyses Hydrolysis of Ala-|-Gly bond in repressor LexA.. Represses a number of genes involved in the response to DNA damage (SOS response), including recA and lexA. In the presence of single-stranded DNA, RecA interacts with LexA causing an autocatalytic cleavage which disrupts the DNA-binding part of LexA, leading to derepression of the SOS regulon and eventually DNA repair. This is LexA repressor from Leuconostoc mesenteroides subsp. mesenteroides (strain ATCC 8293 / DSM 20343 / BCRC 11652 / CCM 1803 / JCM 6124 / NCDO 523 / NBRC 100496 / NCIMB 8023 / NCTC 12954 / NRRL B-1118 / 37Y).